A 308-amino-acid chain; its full sequence is Ornithine carbamoyltransferase (308 aa).

Residues 56–59 (STRT), glutamine 83, arginine 107, and 134–137 (HPCQ) contribute to the carbamoyl phosphate site. Residues asparagine 165, aspartate 225, and 229 to 230 (SM) each bind L-ornithine. Carbamoyl phosphate is bound by residues 266–267 (CL) and arginine 294.

It belongs to the aspartate/ornithine carbamoyltransferase superfamily. OTCase family.

Its subcellular location is the cytoplasm. It catalyses the reaction carbamoyl phosphate + L-ornithine = L-citrulline + phosphate + H(+). It participates in amino-acid biosynthesis; L-arginine biosynthesis; L-arginine from L-ornithine and carbamoyl phosphate: step 1/3. Functionally, reversibly catalyzes the transfer of the carbamoyl group from carbamoyl phosphate (CP) to the N(epsilon) atom of ornithine (ORN) to produce L-citrulline. In Cereibacter sphaeroides (strain ATCC 17023 / DSM 158 / JCM 6121 / CCUG 31486 / LMG 2827 / NBRC 12203 / NCIMB 8253 / ATH 2.4.1.) (Rhodobacter sphaeroides), this protein is Ornithine carbamoyltransferase.